The following is a 97-amino-acid chain: Putative septation protein SpoVG (97 aa).

This sequence belongs to the SpoVG family.

In terms of biological role, could be involved in septation. The polypeptide is Putative septation protein SpoVG (Anaeromyxobacter sp. (strain Fw109-5)).